Consider the following 545-residue polypeptide: Glucose-6-phosphate isomerase (545 aa).

Glutamate 351 (proton donor) is an active-site residue. Catalysis depends on residues histidine 382 and lysine 510.

This sequence belongs to the GPI family.

It localises to the cytoplasm. It carries out the reaction alpha-D-glucose 6-phosphate = beta-D-fructose 6-phosphate. It functions in the pathway carbohydrate biosynthesis; gluconeogenesis. The protein operates within carbohydrate degradation; glycolysis; D-glyceraldehyde 3-phosphate and glycerone phosphate from D-glucose: step 2/4. Its function is as follows. Catalyzes the reversible isomerization of glucose-6-phosphate to fructose-6-phosphate. In Shewanella baltica (strain OS195), this protein is Glucose-6-phosphate isomerase.